The primary structure comprises 606 residues: MGRLKQKGKAGAAKNYVTRTSAIKKLQCSLADFRRLCILKGIFPREPRSRKRANKGSSAPTSFYYAKDIAYLAHEPVLKKLREHKAFAKKLSRALGRGEWSSAKNLEENKPIYRLDHIIKERYPTFIDAVRDIDDALCMVFLFASLPTTTRLPPELMENCSRLAAEWQLYIMRSQSLRKVFLSIKGVYYQAEIMDQTVTWLVPYQFTQNIPADVDVRVMLTFLELYQTLLGFILFKLYTDAGLVYPPPLDAKKDESAAGIGAFSLQDITQPAAQPSRAKAVELDGRKISTKDVRQTIKNIEASHSTHDPDVEMSNPETATTEVEEEFISQASLSNPGLISSLPQSLSTSLFSPYTFFLSREVSRPIFEFMVRSFGGKIGWSASFGSGSPFEETDETITHVIIDRPLVGREESPSQRELRLRRKYVQPQWIVDCINSGKILLEGPYGQGKTLPPHLSPFGEYEGAYDPAAGPLGPSGVEQESESEADEVSEEDEEDQGGLVQAAVEAVTGDPVELRAAELAAEAAGVDYGTFEAKVKKLNKKQMKKPITDGVEDGEKDMNKMMMSNKQKKLYEKMKYSQKKKEIEVSKFGISLDAVLTSSIAGDTDY.

The BRCT domain occupies 346–447; it reads LSTSLFSPYT…KILLEGPYGQ (102 aa). The disordered stretch occupies residues 461 to 497; it reads YEGAYDPAAGPLGPSGVEQESESEADEVSEEDEEDQG. Acidic residues predominate over residues 479-496; sequence QESESEADEVSEEDEEDQ.

Belongs to the pescadillo family. In terms of assembly, component of the NOP7 complex, composed of ERB1, NOP7 and YTM1. The complex is held together by ERB1, which interacts with NOP7 via its N-terminal domain and with YTM1 via a high-affinity interaction between the seven-bladed beta-propeller domains of the 2 proteins. The NOP7 complex associates with the 66S pre-ribosome.

The protein localises to the nucleus. It is found in the nucleolus. The protein resides in the nucleoplasm. Its function is as follows. Component of the NOP7 complex, which is required for maturation of the 25S and 5.8S ribosomal RNAs and formation of the 60S ribosome. This Laccaria bicolor (strain S238N-H82 / ATCC MYA-4686) (Bicoloured deceiver) protein is Pescadillo homolog.